Here is a 181-residue protein sequence, read N- to C-terminus: Inner membrane-spanning protein YciB (181 aa).

Helical transmembrane passes span 8–28 (FPIICFFVAYKFWGIYIATAA), 53–73 (ITLIFILLLGSFTLVFHNAIF), 76–96 (WKPTIVYWIFAIVLFGSHFFG), 121–141 (LSWALFFLILGVLNLFVVYNF), and 149–169 (FKLFGTLVLMLVFILGQAFYI).

Belongs to the YciB family.

It is found in the cell inner membrane. Plays a role in cell envelope biogenesis, maintenance of cell envelope integrity and membrane homeostasis. This chain is Inner membrane-spanning protein YciB, found in Coxiella burnetii (strain CbuG_Q212) (Coxiella burnetii (strain Q212)).